The chain runs to 128 residues: Fluoride-specific ion channel FluC (128 aa).

4 consecutive transmembrane segments (helical) span residues 3–23 (LYAL…RWWF), 33–53 (TLPL…GAAI), 69–89 (FAIT…AETV), and 99–119 (WTFV…ILGI). 2 residues coordinate Na(+): glycine 76 and threonine 79.

The protein belongs to the fluoride channel Fluc/FEX (TC 1.A.43) family.

The protein resides in the cell inner membrane. The enzyme catalyses fluoride(in) = fluoride(out). With respect to regulation, na(+) is not transported, but it plays an essential structural role and its presence is essential for fluoride channel function. Fluoride-specific ion channel. Important for reducing fluoride concentration in the cell, thus reducing its toxicity. In Nitrosospira multiformis (strain ATCC 25196 / NCIMB 11849 / C 71), this protein is Fluoride-specific ion channel FluC.